We begin with the raw amino-acid sequence, 557 residues long: Dihydroxy-acid dehydratase (557 aa).

Asp78 serves as a coordination point for Mg(2+). Cys119 provides a ligand contact to [2Fe-2S] cluster. Mg(2+) is bound by residues Asp120 and Lys121. Position 121 is an N6-carboxylysine (Lys121). Cys191 is a binding site for [2Fe-2S] cluster. Residue Glu442 participates in Mg(2+) binding. The active-site Proton acceptor is the Ser468.

The protein belongs to the IlvD/Edd family. As to quaternary structure, homodimer. The cofactor is [2Fe-2S] cluster. Requires Mg(2+) as cofactor.

It carries out the reaction (2R)-2,3-dihydroxy-3-methylbutanoate = 3-methyl-2-oxobutanoate + H2O. It catalyses the reaction (2R,3R)-2,3-dihydroxy-3-methylpentanoate = (S)-3-methyl-2-oxopentanoate + H2O. The protein operates within amino-acid biosynthesis; L-isoleucine biosynthesis; L-isoleucine from 2-oxobutanoate: step 3/4. Its pathway is amino-acid biosynthesis; L-valine biosynthesis; L-valine from pyruvate: step 3/4. Functions in the biosynthesis of branched-chain amino acids. Catalyzes the dehydration of (2R,3R)-2,3-dihydroxy-3-methylpentanoate (2,3-dihydroxy-3-methylvalerate) into 2-oxo-3-methylpentanoate (2-oxo-3-methylvalerate) and of (2R)-2,3-dihydroxy-3-methylbutanoate (2,3-dihydroxyisovalerate) into 2-oxo-3-methylbutanoate (2-oxoisovalerate), the penultimate precursor to L-isoleucine and L-valine, respectively. This chain is Dihydroxy-acid dehydratase, found in Lachnospira eligens (strain ATCC 27750 / DSM 3376 / VPI C15-48 / C15-B4) (Eubacterium eligens).